Here is a 302-residue protein sequence, read N- to C-terminus: 4-hydroxy-tetrahydrodipicolinate synthase (302 aa).

Thr55 serves as a coordination point for pyruvate. The active-site Proton donor/acceptor is Tyr144. Lys172 (schiff-base intermediate with substrate) is an active-site residue. Val214 is a pyruvate binding site.

It belongs to the DapA family. As to quaternary structure, homotetramer; dimer of dimers.

Its subcellular location is the cytoplasm. The catalysed reaction is L-aspartate 4-semialdehyde + pyruvate = (2S,4S)-4-hydroxy-2,3,4,5-tetrahydrodipicolinate + H2O + H(+). The protein operates within amino-acid biosynthesis; L-lysine biosynthesis via DAP pathway; (S)-tetrahydrodipicolinate from L-aspartate: step 3/4. In terms of biological role, catalyzes the condensation of (S)-aspartate-beta-semialdehyde [(S)-ASA] and pyruvate to 4-hydroxy-tetrahydrodipicolinate (HTPA). The protein is 4-hydroxy-tetrahydrodipicolinate synthase of Prochlorococcus marinus (strain MIT 9313).